Reading from the N-terminus, the 42-residue chain is Profilin (42 aa).

This sequence belongs to the profilin family. As to quaternary structure, occurs in many kinds of cells as a complex with monomeric actin in a 1:1 ratio.

It localises to the cytoplasm. Its subcellular location is the cytoskeleton. In terms of biological role, binds to actin and affects the structure of the cytoskeleton. At high concentrations, profilin prevents the polymerization of actin, whereas it enhances it at low concentrations. This is Profilin from Plantago lanceolata (English plantain).